Consider the following 291-residue polypeptide: Proteasomal ubiquitin receptor ADRM1 homolog rpn1301 (291 aa).

A Pru domain is found at 1–114 (MSLITFKAGK…ERINSYIKDQ (114 aa)). The disordered stretch occupies residues 135–162 (TVEQSEPIAQPTESSKESSEIGAPNSDE). The DEUBAD domain occupies 178-290 (AQAGFGGSTV…ARFVSRNNGS (113 aa)).

It belongs to the ADRM1 family. In terms of assembly, component of the 19S proteasome regulatory particle complex. The 2 S.pombe rpn13 homologs, rpn1301 and rpn1302 are present at a 0.2-1 ratio.

Its subcellular location is the cytoplasm. The protein resides in the nucleus. Component of the 26S proteasome, a multiprotein complex involved in the ATP-dependent degradation of ubiquitinated proteins. This complex plays a key role in the maintenance of protein homeostasis by removing misfolded or damaged proteins, which could impair cellular functions, and by removing proteins whose functions are no longer required. Therefore, the proteasome participates in numerous cellular processes, including cell cycle progression, apoptosis, or DNA damage repair. Within the complex, functions as a proteasomal ubiquitin receptor. This Schizosaccharomyces pombe (strain 972 / ATCC 24843) (Fission yeast) protein is Proteasomal ubiquitin receptor ADRM1 homolog rpn1301 (rpn1301).